Reading from the N-terminus, the 208-residue chain is ATP phosphoribosyltransferase (208 aa).

The protein belongs to the ATP phosphoribosyltransferase family. Short subfamily. Heteromultimer composed of HisG and HisZ subunits.

The protein resides in the cytoplasm. It catalyses the reaction 1-(5-phospho-beta-D-ribosyl)-ATP + diphosphate = 5-phospho-alpha-D-ribose 1-diphosphate + ATP. It participates in amino-acid biosynthesis; L-histidine biosynthesis; L-histidine from 5-phospho-alpha-D-ribose 1-diphosphate: step 1/9. In terms of biological role, catalyzes the condensation of ATP and 5-phosphoribose 1-diphosphate to form N'-(5'-phosphoribosyl)-ATP (PR-ATP). Has a crucial role in the pathway because the rate of histidine biosynthesis seems to be controlled primarily by regulation of HisG enzymatic activity. This is ATP phosphoribosyltransferase from Oceanobacillus iheyensis (strain DSM 14371 / CIP 107618 / JCM 11309 / KCTC 3954 / HTE831).